The primary structure comprises 510 residues: Calcium-dependent lipid-binding protein (510 aa).

A helical transmembrane segment spans residues 1-21 (MGLISGILFGIIFGVALMAGW). 2 SMP-LTD domains span residues 66-248 (AFEQ…VPIG) and 66-250 (AFEQ…IGGI). Residues 226-488 (DDTVDTIVKD…FMGRTITGQS (263 aa)) form a phospholipid binding region. C2 domains lie at 242–362 (RIVV…ELEL) and 246–364 (PIGG…ELNL). Ca(2+) is bound by residues lysine 278, glutamate 279, aspartate 285, aspartate 333, lysine 334, aspartate 335, aspartate 339, and glutamate 340. The stretch at 390-417 (EFNKEEQMAALEDEKKIMEERKRLKEAG) forms a coiled coil. Residues 461-500 (MVGSGFGAVGSGLSKAGRFMGRTITGQSSKRSGSSTPVNT) form the C2 3 domain. A disordered region spans residues 484-510 (ITGQSSKRSGSSTPVNTVPENDGAKQQ).

Belongs to the synaptotagmin family. In terms of assembly, interacts with the biotrophic pathogenic fungi Microbotryum violaceum effector MVLG_01732. The cofactor is Ca(2+). In terms of tissue distribution, mostly expressed in rosette leaves and flowers, to lower extent, in cauline leaves, roots and stems, and, at low levels, in siliques.

Its subcellular location is the nucleus membrane. May be involved in membrane trafficking. Acts as a repressor of abiotic stress (e.g. drought and salt) responses by binding specifically to the promoter of THAS1 to regulate its transcription. Binds to membrane lipid ceramides. This is Calcium-dependent lipid-binding protein from Arabidopsis thaliana (Mouse-ear cress).